A 505-amino-acid polypeptide reads, in one-letter code: MEAQSFGTLNYIALFAYLGAIMAVGVYFARRQKSADDYFKAGGRIPGWAAGFSVFATTLSSITFMSIPAKAYTSDWTFLIGQYVAIAILPIVFWFYIPFFRKLNLTSVYEYLERRFDVRMRLFGSISFMLFHIGRIAIVTYLTALALMPFIDISPLMIVFLIGVLCIIYTFLGGIEGVIWTDVIQGVMLSVAAILIFVVICFNVDGGIVEVFSMSNQADKYFPAEQFSWSWTDSTIPVLMIGFFFASLQQFTASQDVVQRYIVTDNIDETKKALITNAKLVACVPIFFFAVGSALFAYYTQNPELLPENFNTGGILPFYVISQMPVGVAGLIIAAIFAASQSSISSSLNSIAACFTSDIYEKVSKNPTSEQKLRIGRTLTVVAGLLGVVASTYLIMSNESEIWDAFNSLLGLMGGPMTGLFMLGIFVRRANANSALLGVVASIATVLWVRSATDLNFFFYGVIGTLMVVIVGYLTAPMFKNNLNSDEIDELSATKEKRSTTAEKA.

5 helical membrane passes run 9 to 29 (LNYI…VYFA), 45 to 65 (IPGW…ITFM), 80 to 100 (IGQY…IPFF), 128 to 148 (FMLF…LALM), and 155 to 175 (PLMI…LGGI). A56 is a binding site for Na(+). T58 lines the N-acetyl-alpha-neuraminate pocket. L59 is a binding site for Na(+). Residues S60, T63, Q82, and R135 each contribute to the N-acetyl-alpha-neuraminate site. D182 provides a ligand contact to Na(+). Helical transmembrane passes span 183-203 (VIQG…ICFN), 227-247 (FSWS…FFAS), 280-300 (LVAC…AYYT), and 318-338 (FYVI…AIFA). 5 residues coordinate Na(+): A339, S342, S343, S345, and S346. 4 helical membrane-spanning segments follow: residues 378-398 (TLTV…IMSN), 406-426 (FNSL…LGIF), 435-455 (ALLG…ATDL), and 457-477 (FFFY…LTAP).

This sequence belongs to the sodium:solute symporter (SSF) (TC 2.A.21) family.

It is found in the cell inner membrane. It carries out the reaction N-acetyl-alpha-neuraminate(out) + 2 Na(+)(out) = N-acetyl-alpha-neuraminate(in) + 2 Na(+)(in). Functionally, symporter that uses the Na(+) gradient as the driving force for the uptake of the sialic acid N-acetylneuraminic acid (Neu5Ac). Might play a role in persistence after colonization. The sequence is that of Sodium/sialic acid symporter NanT from Aliivibrio fischeri (strain ATCC 700601 / ES114) (Vibrio fischeri).